The following is a 350-amino-acid chain: (RS)-norcoclaurine 6-O-methyltransferase (350 aa).

Residue Met166 participates in S-adenosyl-L-methionine binding. Asp169 lines the substrate pocket. Residues Thr170, Gly195, Asp218, 238–239 (DM), and Lys252 contribute to the S-adenosyl-L-methionine site. Residues 253–257 (CILHD) and Asp306 each bind substrate. His256 serves as the catalytic Proton acceptor.

Belongs to the class I-like SAM-binding methyltransferase superfamily. Cation-independent O-methyltransferase family. COMT subfamily. In terms of assembly, homodimer. Expressed in leaf primordia of rhizomes and root endodermis.

It catalyses the reaction (S)-norcoclaurine + S-adenosyl-L-methionine = (S)-coclaurine + S-adenosyl-L-homocysteine + H(+). The enzyme catalyses norcoclaurine + S-adenosyl-L-methionine = coclaurine + S-adenosyl-L-homocysteine + H(+). Inhibited by sanguinarine. Functionally, involved in the biosynthesis of coclaurine, a precursor of benzylisoquinoline alkaloids. Catalyzes the transfer of the S-methyl group of S-adenosyl-L-methionine (AdoMet) to the 6-hydroxyl group of norcoclaurine to form coclaurine. The chain is (RS)-norcoclaurine 6-O-methyltransferase from Thalictrum flavum subsp. glaucum (Yellow meadow rue).